The chain runs to 488 residues: Argininosuccinate lyase (488 aa).

This sequence belongs to the lyase 1 family. Argininosuccinate lyase subfamily.

The protein localises to the cytoplasm. The enzyme catalyses 2-(N(omega)-L-arginino)succinate = fumarate + L-arginine. Its pathway is amino-acid biosynthesis; L-arginine biosynthesis; L-arginine from L-ornithine and carbamoyl phosphate: step 3/3. The protein is Argininosuccinate lyase of Corynebacterium jeikeium (strain K411).